Here is a 401-residue protein sequence, read N- to C-terminus: 3-hydroxyisobutyryl-CoA hydrolase-like protein 1, mitochondrial (401 aa).

Residues 1–26 (MHNAKGLLGRIVRDKLWRFGYRRSLC) constitute a mitochondrion transit peptide.

The protein belongs to the enoyl-CoA hydratase/isomerase family.

It localises to the mitochondrion. The protein is 3-hydroxyisobutyryl-CoA hydrolase-like protein 1, mitochondrial of Arabidopsis thaliana (Mouse-ear cress).